The chain runs to 102 residues: uncharacterized protein (102 aa).

Positions alanine 79 to serine 102 are disordered.

This is an uncharacterized protein from Homo sapiens (Human).